The sequence spans 132 residues: MTSSLALVLVFGGAAVCAELALRGGYRERSNQDDPEYLELAHYATSTWSAQQPGKTHFDTVVEVLKVETQTVAGTNYRLTLKVAESTCELTSTYNKDTCQANANAAQRTCTTVIYRNLQGEKSISSFECAAA.

The signal sequence occupies residues methionine 1 to alanine 18. One can recognise a Cystatin domain in the interval glutamate 28–asparagine 117. Positions threonine 87–alanine 131 are required for interaction with mouse ANXA2. 2 cysteine pairs are disulfide-bonded: cysteine 88–cysteine 99 and cysteine 110–cysteine 129.

The protein belongs to the cystatin family. Monomer. Interacts (via loop 2) with mouse ANXA2; the interaction results in reduced activation of mouse NLRC4 inflammasome formation upon Anaplasma phagocytophilum infection. As to expression, detected in salivary gland and midgut.

It localises to the secreted. Its function is as follows. Contributes to the suppression of the host's immune response to tick salivary proteins and is important for successful feeding on hosts. Inhibitor of cysteine proteinases. Inhibits host immune responses, probably via its inhibition of host cathepsins. Inhibits host papain (in vitro). Inhibits host cathepsin L (CTSL) (in vitro). Inhibits host cathepsin L2 (CTSV) (in vitro). Attenuates IFN-beta (IFNB1)-triggered JAK/STAT signaling pathway in mouse dendritic cells. Suppresses induction of interferon-stimulated gene IRF7 and production of CXCL10 in lipopolysaccharide (LPS)-activated dendritic cells. (Microbial infection) Down-regulates TLR2-mediated host responses to infection by Borrelia burgdorferi and the production of chemokines CCL3 and CXCL10 by host dendritic cells. Enhances infection by the tick-transmitted pathogen B.burgdorferi (in vitro). Functionally, (Microbial infection) Inhibits host inflammatory responses to Anaplasma phagocytophilum infection. Interacts with mouse ANXA2 and suppresses oligomerization of NLRC4, a key component of host inflammasomes that sense A.phagocytophilum infection. Indirectly targets caspase-1 (CASP1) activation and subsequent IL-1beta (IL1B) and IL18 release by inhibiting reactive oxygen species (ROS) production from NADPH oxidase complex in A.phagocytophilum-infected mouse macrophages. In terms of biological role, (Microbial infection) Promotes replication of tick-borne encephalitis virus in mouse dendritic cells and reduces anti-viral effect of host IFN-beta (IFNB1). The chain is Salivary cystatin-L2 from Ixodes scapularis (Black-legged tick).